A 238-amino-acid chain; its full sequence is 7-cyano-7-deazaguanine synthase (238 aa).

14–24 (FSGGQDSTTCL) is an ATP binding site. Zn(2+) contacts are provided by Cys195, Cys204, Cys207, and Cys210.

Belongs to the QueC family. It depends on Zn(2+) as a cofactor.

The enzyme catalyses 7-carboxy-7-deazaguanine + NH4(+) + ATP = 7-cyano-7-deazaguanine + ADP + phosphate + H2O + H(+). It functions in the pathway purine metabolism; 7-cyano-7-deazaguanine biosynthesis. In terms of biological role, catalyzes the ATP-dependent conversion of 7-carboxy-7-deazaguanine (CDG) to 7-cyano-7-deazaguanine (preQ(0)). The sequence is that of 7-cyano-7-deazaguanine synthase from Baumannia cicadellinicola subsp. Homalodisca coagulata.